The sequence spans 88 residues: MAVKLRLTRLGSKRNPFYRIVAADARAPRDGRNIEQIGTYNPNNVNAAEVKIDEELALKWLKNGAKPTDTVHNILSREGILKKFDDQK.

This sequence belongs to the bacterial ribosomal protein bS16 family.

The sequence is that of Small ribosomal subunit protein bS16 from Staphylococcus saprophyticus subsp. saprophyticus (strain ATCC 15305 / DSM 20229 / NCIMB 8711 / NCTC 7292 / S-41).